Here is a 257-residue protein sequence, read N- to C-terminus: UPF0246 protein RSKD131_2757 (257 aa).

This sequence belongs to the UPF0246 family.

This chain is UPF0246 protein RSKD131_2757, found in Cereibacter sphaeroides (strain KD131 / KCTC 12085) (Rhodobacter sphaeroides).